Here is a 1044-residue protein sequence, read N- to C-terminus: MSDSQQSITVLEELFRKLETATSETREGISSELSSFLNGNIIEHDVPEVFFDEFQKAIQSKQKALNTLGAVAYIANETNLSPSVEPYIVATVPSVCSKAGSKDNDVQLAATKALKAIASAVNPVAVKALLPHLIHSLETSNKWKEKVAVLEVISVLVDAAKEQIALRMPELIPVLSESMWDTKKGVKEAATTTITKATETVDNKDIERFIPKLIECIANPNEVPETVHLLGATTFVAEVTPATLSIMVPLLSRGLAERETSIKRKAAVIIDNMCKLVEDPQVVAPFLGKLLPGLKNNFATIADPEAREVTLKALKTLRRVGNVGEDDVLPEISHAGDVSTTLGVIKELLEPEKVAPRFTIVVEYIAAIAANLIDERIIDQQTWFTHVTPYMTIFLHEKTAKEILDDFRKRAVDNIPVGPNFQDEEDEGEDLCNCEFSLAYGAKILLNKTQLRLKRGRRYGLCGPNGAGKSTLMRSIANGQVDGFPTQDECRTVYVEHDIDNTHSDMSVLDFVYSGNVGTKDVITSKLKEFGFSDEMIEMPIASLSGGWKMKLALARAVLKDADILLLDEPTNHLDTVNVEWLVNYLNTCGITSVIVSHDSGFLDKVCQYIIHYEGLKLRKYKGNLSEFVQKCPTAQSYYELGASDLEFQFPTPGYLEGVKTKQKAIVKVSNMTFQYPGTTKPQVSDVTFQCSLSSRIAVIGPNGAGKSTLINVLTGELLPTSGEVYTHENCRIAYIKQHAFAHIESHLDKTPSEYIQWRFQTGEDRETMDRANRQINENDAEAMNKIFKIEGTPRRVAGIHSRRKFKNTYEYECSFLLGENIGMKSERWVPMMSVDNAWLPRGELIESHSKMVAEIDMKEALASGQFRALTRKEIELHCAMLGLDSELVSHSRIRGLSGGQKVKLVLAACTWQRPHLIVLDEPTNYLDRDSLGALSKALKAFEGGVIIITHSAEFTKNLTDEVWAVKDGKMTPSGHNWVAGQGAGPRIEKKEEEGDKFDAMGNKINSGKKKSKLSSAELRKKKKERMKKKKEMGDEYVSSDEDF.

N-acetylserine is present on Ser-2. An HEAT 1 repeat occupies 5 to 42 (QQSITVLEELFRKLETATSETREGISSELSSFLNGNII). Positions 42, 44, and 83 each coordinate ADP. HEAT repeat units follow at residues 86-123 (PYIV…AVNP), 124-162 (VAVK…AAKE), 166-203 (LRMP…TVDN), 205-241 (DIER…EVTP), 242-279 (ATLS…LVED), and 285-323 (PFLG…VGNV). Lys-187 and Lys-196 each carry N6,N6,N6-trimethyllysine. ADP contacts are provided by Thr-392, His-396, and Glu-397. ABC transporter domains are found at residues 426–641 (DEGE…YYEL) and 667–993 (VKVS…KKEE). Residue Asn-703 coordinates ADP. An N6,N6,N6-trimethyllysine modification is found at Lys-789. Residues Glu-922, Asn-925, and His-951 each coordinate ADP. Thr-972 carries the post-translational modification Phosphothreonine. Ser-974 is subject to Phosphoserine. Residues 975–1044 (GHNWVAGQGA…DEYVSSDEDF (70 aa)) are disordered. Basic and acidic residues predominate over residues 987–999 (RIEKKEEEGDKFD). Residues 1020-1031 (RKKKKERMKKKK) show a composition bias toward basic residues. Phosphoserine occurs at positions 1039 and 1040.

The protein belongs to the ABC transporter superfamily. ABCF family. EF3 subfamily. Monomer.

It localises to the cytoplasm. The enzyme catalyses ATP + H2O = ADP + phosphate + H(+). It functions in the pathway protein biosynthesis; polypeptide chain elongation. In terms of biological role, ribosome-dependent ATPase that promotes the translation of proteins required for detoxification of reactive oxygen species. Required for the ATP-dependent release of deacylated tRNA from the ribosomal E-site during protein biosynthesis. Stimulates the eEF1A-dependent binding of aminoacyl-tRNA to the ribosomal A-site, which has reduced affinity for tRNA as long as the E-site is occupied. Assists translation termination by stimulating the release of nascent protein from the ribosome by release factors. In Saccharomyces cerevisiae (strain ATCC 204508 / S288c) (Baker's yeast), this protein is Elongation factor 3B.